Here is a 493-residue protein sequence, read N- to C-terminus: Ferruginol synthase 1 (493 aa).

Residues 2–22 form a helical membrane-spanning segment; the sequence is DSFPLLAALFFILAATWFISF. Residue cysteine 437 participates in heme binding.

The protein belongs to the cytochrome P450 family. Requires heme as cofactor. In terms of tissue distribution, expressed in leaf glandular trichomes.

The protein localises to the membrane. It carries out the reaction abieta-8,11,13-triene + reduced [NADPH--hemoprotein reductase] + O2 = ferruginol + oxidized [NADPH--hemoprotein reductase] + H2O + H(+). The enzyme catalyses ferruginol + reduced [NADPH--hemoprotein reductase] + O2 = 11-hydroxyferruginol + oxidized [NADPH--hemoprotein reductase] + H2O + H(+). It catalyses the reaction miltiradiene + 2 reduced [NADPH--hemoprotein reductase] + 2 O2 = 11-oxomiltiradiene + 2 oxidized [NADPH--hemoprotein reductase] + 3 H2O + 2 H(+). Its pathway is secondary metabolite biosynthesis; terpenoid biosynthesis. In terms of biological role, monooxygenase involved in the biosynthesis of labdane-related diterpenes natural products. Catalyzes the oxidation of abietatriene to produce ferruginol. Catalyzes the oxidation of ferruginol at C-12 to produce 11-hydroxyferruginol. Ferruginol and 11-hydroxyferruginol are intermediates in the biosynthesis of carnosate, a potent antioxidant. May also convert miltiradiene into 11-oxomiltiradiene. This is Ferruginol synthase 1 from Rosmarinus officinalis (Rosemary).